A 746-amino-acid polypeptide reads, in one-letter code: PAN2-PAN3 deadenylation complex subunit pan3 (746 aa).

The C3H1-type zinc-finger motif lies at 7-35 (PKNQKQCKNIALHGYCRNSDKCEFSHELT). Residues 64–97 (QQQQQQQNSNGNGSNNTATSNNPIISPNSNIASP) show a composition bias toward low complexity. Disordered stretches follow at residues 64-100 (QQQQQQQNSNGNGSNNTATSNNPIISPNSNIASPLKK), 169-205 (DDQHLYPYGDNSVDDYEQHQYEPQPQPNNGIDPNMNN), and 219-275 (NASP…PSLQ). A compositionally biased stretch (polar residues) spans 196-205 (NNGIDPNMNN). Low complexity predominate over residues 221 to 275 (SPQSYQQQFQQPNPSPQSSSQQQQQQQQQQQQAVYQQQQQQQPSSQPLAQNPSLQ). The segment at 351-610 (DPNDPRIKNI…NIDEVVLMIS (260 aa)) is pseudokinase domain. Residues R407, 457–464 (EFFPGSET), and 509–510 (SK) each bind ATP. Positions 611–649 (GRLLQENNYLHTYTDDLETELSKEYENGRLFRLVTKLGF) form a coiled coil. The interval 650–746 (INERPLYDMD…SELVSQKSHI (97 aa)) is knob domain.

Belongs to the protein kinase superfamily. PAN3 family. As to quaternary structure, homodimer. Forms a heterotrimer with a catalytic subunit PAN2 to form the poly(A)-nuclease (PAN) deadenylation complex. Interacts (via PAM-2 motif) with poly(A)-binding protein (via PABC domain), conferring substrate specificity of the enzyme complex.

The protein resides in the cytoplasm. Its function is as follows. Regulatory subunit of the poly(A)-nuclease (PAN) deadenylation complex, one of two cytoplasmic mRNA deadenylases involved in mRNA turnover. PAN specifically shortens poly(A) tails of RNA and the activity is stimulated by poly(A)-binding protein (PABP). PAN deadenylation is followed by rapid degradation of the shortened mRNA tails by the CCR4-NOT complex. Deadenylated mRNAs are then degraded by two alternative mechanisms, namely exosome-mediated 3'-5' exonucleolytic degradation, or deadenylation-dependent mRNA decaping and subsequent 5'-3' exonucleolytic degradation by XRN1. PAN3 acts as a positive regulator for PAN activity, recruiting the catalytic subunit PAN2 to mRNA via its interaction with RNA and PABP. The chain is PAN2-PAN3 deadenylation complex subunit pan3 from Dictyostelium discoideum (Social amoeba).